The chain runs to 74 residues: Large ribosomal subunit protein bL31 (74 aa).

The protein belongs to the bacterial ribosomal protein bL31 family. Type A subfamily. In terms of assembly, part of the 50S ribosomal subunit.

In terms of biological role, binds the 23S rRNA. This is Large ribosomal subunit protein bL31 from Xanthobacter autotrophicus (strain ATCC BAA-1158 / Py2).